Consider the following 458-residue polypeptide: Exodeoxyribonuclease 7 large subunit (458 aa).

Belongs to the XseA family. Heterooligomer composed of large and small subunits.

The protein resides in the cytoplasm. It carries out the reaction Exonucleolytic cleavage in either 5'- to 3'- or 3'- to 5'-direction to yield nucleoside 5'-phosphates.. In terms of biological role, bidirectionally degrades single-stranded DNA into large acid-insoluble oligonucleotides, which are then degraded further into small acid-soluble oligonucleotides. The chain is Exodeoxyribonuclease 7 large subunit from Stutzerimonas stutzeri (strain A1501) (Pseudomonas stutzeri).